The sequence spans 314 residues: Flotillin-like protein FloA (314 aa).

Residues 4–24 (IGPIIIAVLIIIFLIVFFTLV) traverse the membrane as a helical segment.

It belongs to the flotillin-like FloA family. Homooligomerizes.

Its subcellular location is the cell membrane. The protein localises to the membrane raft. In terms of biological role, found in functional membrane microdomains (FMM) that may be equivalent to eukaryotic membrane rafts. FMMs are highly dynamic and increase in number as cells age. Flotillins are thought to be important factors in membrane fluidity. The protein is Flotillin-like protein FloA of Listeria innocua serovar 6a (strain ATCC BAA-680 / CLIP 11262).